The chain runs to 1250 residues: Probable autotransporter YfaL (1250 aa).

A signal peptide spans 1-28 (MRIIFLRKEYLSLLPSMIASLFSANGVA). The interval 914–951 (RSQEVTPPSPPDPDPTPDPDPTPDPDPTPDPEPTPAYQ) is disordered. Residues 919–920 (TP) form repeat 1. The interval 919-948 (TPPSPPDPDPTPDPDPTPDPDPTPDPEPTP) is 15 X 2 AA approximate tandem repeats of [DTPE]-P. The 2; approximate repeat unit spans residues 921 to 922 (PS). Residues 923–924 (PP) form repeat 3. Residues 925 to 926 (DP) form a 4; approximate repeat. 11 repeat units span residues 927-928 (DP), 929-930 (TP), 931-932 (DP), 933-934 (DP), 935-936 (TP), 937-938 (DP), 939-940 (DP), 941-942 (TP), 943-944 (DP), 945-946 (EP), and 947-948 (TP). Residues 928-942 (PTPDPDPTPDPDPTP) show a composition bias toward acidic residues. The Autotransporter domain maps to 980 to 1250 (AGGDGQTLNL…AGFLSMTVKW (271 aa)).

An approximately 170 kDa protein is detected in the outer membrane, while a C-terminal 55 kDa fragment is detected in whole cells. The full-length putative autotransporter may be cleaved to release the mature protein from the outer membrane; Pefabloc SC, a Ser-Thr protease inhibitor prevents the appearance of the 55 kDa C--terminal fragment.

It is found in the periplasm. The protein resides in the secreted. Its subcellular location is the cell surface. The protein localises to the cell outer membrane. In terms of biological role, probably an autotransporter. Upon overexpression shows increased adherence to polyvinyl chloride (PVC) plates, increased mature biofilm formation. The polypeptide is Probable autotransporter YfaL (yfaL) (Escherichia coli (strain K12)).